Consider the following 276-residue polypeptide: Large ribosomal subunit protein uL2 (276 aa).

The tract at residues 221 to 276 (RGSAMNPNDHPHGGGEGRAPIGRKSPMTPWGKKARGVKTRDRKKASNALIIRRRTK) is disordered. The segment covering 252–276 (KKARGVKTRDRKKASNALIIRRRTK) has biased composition (basic residues).

The protein belongs to the universal ribosomal protein uL2 family. Part of the 50S ribosomal subunit. Forms a bridge to the 30S subunit in the 70S ribosome.

In terms of biological role, one of the primary rRNA binding proteins. Required for association of the 30S and 50S subunits to form the 70S ribosome, for tRNA binding and peptide bond formation. It has been suggested to have peptidyltransferase activity; this is somewhat controversial. Makes several contacts with the 16S rRNA in the 70S ribosome. The chain is Large ribosomal subunit protein uL2 from Onion yellows phytoplasma (strain OY-M).